The chain runs to 369 residues: S-(hydroxymethyl)glutathione dehydrogenase (369 aa).

Positions 40, 62, 92, 95, 98, 106, and 169 each coordinate Zn(2+).

The protein belongs to the zinc-containing alcohol dehydrogenase family. Class-III subfamily. In terms of assembly, homodimer. The cofactor is Zn(2+).

Its subcellular location is the cytoplasm. The catalysed reaction is S-(hydroxymethyl)glutathione + NADP(+) = S-formylglutathione + NADPH + H(+). It carries out the reaction S-(hydroxymethyl)glutathione + NAD(+) = S-formylglutathione + NADH + H(+). The enzyme catalyses a primary alcohol + NAD(+) = an aldehyde + NADH + H(+). It catalyses the reaction a secondary alcohol + NAD(+) = a ketone + NADH + H(+). The catalysed reaction is S-nitrosoglutathione + NADH + H(+) = S-(hydroxysulfenamide)glutathione + NAD(+). Its function is as follows. Has high formaldehyde dehydrogenase activity in the presence of glutathione and catalyzes the oxidation of normal alcohols in a reaction that is not GSH-dependent. In addition, hemithiolacetals other than those formed from GSH, including omega-thiol fatty acids, also are substrates. Also acts as a S-nitroso-glutathione reductase by catalyzing the NADH-dependent reduction of S-nitrosoglutathione. The protein is S-(hydroxymethyl)glutathione dehydrogenase (frmA) of Escherichia coli (strain SMS-3-5 / SECEC).